The following is a 624-amino-acid chain: Laccase-1 (624 aa).

Residues 1 to 20 form the signal peptide; that stretch reads MRGLAKLFFLSCSFVSLVSS. Plastocyanin-like domains are found at residues 72 to 183 and 195 to 343; these read FASP…HSPN and DRIV…CMFG. Cu cation contacts are provided by H117 and H119. An intrachain disulfide couples C138 to C578. N149 is a glycosylation site (N-linked (GlcNAc...) asparagine). Cu cation contacts are provided by H162 and H164. N-linked (GlcNAc...) asparagine glycosylation is found at N242 and N430. The Plastocyanin-like 3 domain maps to 469–562; that stretch reads IIINNLDTVI…GKLAVIVVQP (94 aa). Cu cation contacts are provided by H480, H483, and H485. Residue N503 is glycosylated (N-linked (GlcNAc...) asparagine). 4 residues coordinate Cu cation: H543, C544, H545, and H549. The interval 579–604 is disordered; sequence ANTDPNAFGPAKRSSSPSIQSSKTSS. Residues 592-604 are compositionally biased toward low complexity; that stretch reads SSSPSIQSSKTSS.

It belongs to the multicopper oxidase family. Cu cation is required as a cofactor.

Its subcellular location is the secreted. It localises to the cell wall. It catalyses the reaction 4 hydroquinone + O2 = 4 benzosemiquinone + 2 H2O. Functionally, laccase that catalyzes the oxidation of certain aromatic compounds, including L-dopa, to quinones, which then polymerize to melanin. Able to oxidize a wide variety of aromatic diphenol and diamino groups in the ortho, meta, and para positions but not monophenolic groups such as in phenol, tyramine, or tyrosine. Plays an important role in virulence. Plays a role in dissemination to extrapulmonary sites but is not involved in pulmonary growth or in elicitation of cellular immune responses in the lung. This Cryptococcus neoformans var. neoformans serotype D (strain B-3501A) (Filobasidiella neoformans) protein is Laccase-1.